Reading from the N-terminus, the 161-residue chain is Dihydrofolate reductase type 1 from Tn4003 (161 aa).

The DHFR domain maps to 2 to 157; the sequence is TLSIIVAHDK…IPHTFLHLVR (156 aa). 6-8 contacts substrate; sequence IVA. Residues 7–8 and 15–20 each bind NADP(+); these read VA and IGYQNQ. Asp-28 contributes to the substrate binding site. 44 to 47 serves as a coordination point for NADP(+); the sequence is ARKT. Substrate is bound at residue Arg-58. Residues 63-66 and 93-98 contribute to the NADP(+) site; these read LTNQ and FGGQTL. Substrate is bound at residue Thr-112.

The protein belongs to the dihydrofolate reductase family.

The catalysed reaction is (6S)-5,6,7,8-tetrahydrofolate + NADP(+) = 7,8-dihydrofolate + NADPH + H(+). The protein operates within cofactor biosynthesis; tetrahydrofolate biosynthesis; 5,6,7,8-tetrahydrofolate from 7,8-dihydrofolate: step 1/1. Its function is as follows. Key enzyme in folate metabolism. Catalyzes an essential reaction for de novo glycine and purine synthesis, and for DNA precursor synthesis. This chain is Dihydrofolate reductase type 1 from Tn4003 (dfrA), found in Staphylococcus aureus.